The primary structure comprises 302 residues: Pyridoxal 5'-phosphate synthase subunit PdxS (302 aa).

Asp32 is a binding site for D-ribose 5-phosphate. The Schiff-base intermediate with D-ribose 5-phosphate role is filled by Lys89. D-ribose 5-phosphate is bound at residue Gly161. Arg173 contributes to the D-glyceraldehyde 3-phosphate binding site. D-ribose 5-phosphate contacts are provided by residues Gly222 and 243 to 244; that span reads GS. The disordered stretch occupies residues 278–302; the sequence is GIGKGMKGQSNEDLPDEEKLQGRGV.

Belongs to the PdxS/SNZ family. In the presence of PdxT, forms a dodecamer of heterodimers.

The enzyme catalyses aldehydo-D-ribose 5-phosphate + D-glyceraldehyde 3-phosphate + L-glutamine = pyridoxal 5'-phosphate + L-glutamate + phosphate + 3 H2O + H(+). It functions in the pathway cofactor biosynthesis; pyridoxal 5'-phosphate biosynthesis. Catalyzes the formation of pyridoxal 5'-phosphate from ribose 5-phosphate (RBP), glyceraldehyde 3-phosphate (G3P) and ammonia. The ammonia is provided by the PdxT subunit. Can also use ribulose 5-phosphate and dihydroxyacetone phosphate as substrates, resulting from enzyme-catalyzed isomerization of RBP and G3P, respectively. In Halorubrum lacusprofundi (strain ATCC 49239 / DSM 5036 / JCM 8891 / ACAM 34), this protein is Pyridoxal 5'-phosphate synthase subunit PdxS.